A 33-amino-acid polypeptide reads, in one-letter code: Cytochrome b6-f complex subunit 6 (33 aa).

Residues 4-24 (ITIISYFGLLLASIIFTLVLF) traverse the membrane as a helical segment.

It belongs to the PetL family. In terms of assembly, the 4 large subunits of the cytochrome b6-f complex are cytochrome b6, subunit IV (17 kDa polypeptide, PetD), cytochrome f and the Rieske protein, while the 4 small subunits are PetG, PetL, PetM and PetN. The complex functions as a dimer.

The protein resides in the plastid. The protein localises to the chloroplast thylakoid membrane. In terms of biological role, component of the cytochrome b6-f complex, which mediates electron transfer between photosystem II (PSII) and photosystem I (PSI), cyclic electron flow around PSI, and state transitions. PetL is important for photoautotrophic growth as well as for electron transfer efficiency and stability of the cytochrome b6-f complex. The sequence is that of Cytochrome b6-f complex subunit 6 from Pinus mugo (Dwarf mountain pine).